The sequence spans 25 residues: Caerin-1.17 (25 aa).

At leucine 25 the chain carries Leucine amide.

The protein belongs to the frog skin active peptide (FSAP) family. Caerin subfamily. In terms of tissue distribution, expressed by the skin dorsal glands.

It localises to the secreted. In terms of biological role, caerin-1.17 shows significant activity against Gram-positive organisms, but is less effective against Gram-negative organisms. This is Caerin-1.17 from Ranoidea gracilenta (Dainty green tree frog).